A 299-amino-acid polypeptide reads, in one-letter code: Probable endonuclease 4 (299 aa).

Zn(2+) is bound by residues H68, H110, E145, D179, H182, H214, D227, H229, and E259.

This sequence belongs to the AP endonuclease 2 family. Requires Zn(2+) as cofactor.

The catalysed reaction is Endonucleolytic cleavage to 5'-phosphooligonucleotide end-products.. Endonuclease IV plays a role in DNA repair. It cleaves phosphodiester bonds at apurinic or apyrimidinic (AP) sites, generating a 3'-hydroxyl group and a 5'-terminal sugar phosphate. In Exiguobacterium sibiricum (strain DSM 17290 / CCUG 55495 / CIP 109462 / JCM 13490 / 255-15), this protein is Probable endonuclease 4.